Consider the following 951-residue polypeptide: Protein translocase subunit SecA (951 aa).

Residues Q90, 108–112, and D509 contribute to the ATP site; that span reads GEGKT.

It belongs to the SecA family. In terms of assembly, monomer and homodimer. Part of the essential Sec protein translocation apparatus which comprises SecA, SecYEG and auxiliary proteins SecDF. Other proteins may also be involved.

The protein resides in the cell inner membrane. The protein localises to the cellular thylakoid membrane. Its subcellular location is the cytoplasm. The catalysed reaction is ATP + H2O + cellular proteinSide 1 = ADP + phosphate + cellular proteinSide 2.. Its function is as follows. Part of the Sec protein translocase complex. Interacts with the SecYEG preprotein conducting channel. Has a central role in coupling the hydrolysis of ATP to the transfer of proteins into and across the cell membrane, serving as an ATP-driven molecular motor driving the stepwise translocation of polypeptide chains across the membrane. In terms of biological role, probably participates in protein translocation into and across both the cytoplasmic and thylakoid membranes in cyanobacterial cells. The protein is Protein translocase subunit SecA of Prochlorococcus marinus (strain MIT 9303).